The following is a 389-amino-acid chain: 23S rRNA (uracil(747)-C(5))-methyltransferase RlmC (389 aa).

Residues Cys5, Cys13, Cys16, and Cys94 each coordinate [4Fe-4S] cluster. S-adenosyl-L-methionine contacts are provided by Gln219, Phe248, Glu275, and Asn321. Cys348 (nucleophile) is an active-site residue.

This sequence belongs to the class I-like SAM-binding methyltransferase superfamily. RNA M5U methyltransferase family. RlmC subfamily.

The catalysed reaction is uridine(747) in 23S rRNA + S-adenosyl-L-methionine = 5-methyluridine(747) in 23S rRNA + S-adenosyl-L-homocysteine + H(+). Catalyzes the formation of 5-methyl-uridine at position 747 (m5U747) in 23S rRNA. The protein is 23S rRNA (uracil(747)-C(5))-methyltransferase RlmC of Mannheimia succiniciproducens (strain KCTC 0769BP / MBEL55E).